The sequence spans 358 residues: Carbamoyl phosphate synthase small chain (358 aa).

Positions 1 to 168 (MKRLLLLEDG…TKLAYASPGV (168 aa)) are CPSase. Residues serine 45, glycine 219, and glycine 221 each coordinate L-glutamine. In terms of domain architecture, Glutamine amidotransferase type-1 spans 171–357 (NIVLVDFGLK…INMIDDFQQK (187 aa)). Cysteine 246 serves as the catalytic Nucleophile. 5 residues coordinate L-glutamine: methionine 247, glutamine 250, asparagine 288, glycine 290, and tyrosine 291. Active-site residues include histidine 330 and aspartate 332.

The protein belongs to the CarA family. In terms of assembly, composed of two chains; the small (or glutamine) chain promotes the hydrolysis of glutamine to ammonia, which is used by the large (or ammonia) chain to synthesize carbamoyl phosphate. Tetramer of heterodimers (alpha,beta)4.

The catalysed reaction is hydrogencarbonate + L-glutamine + 2 ATP + H2O = carbamoyl phosphate + L-glutamate + 2 ADP + phosphate + 2 H(+). It catalyses the reaction L-glutamine + H2O = L-glutamate + NH4(+). It participates in amino-acid biosynthesis; L-arginine biosynthesis; carbamoyl phosphate from bicarbonate: step 1/1. Its pathway is pyrimidine metabolism; UMP biosynthesis via de novo pathway; (S)-dihydroorotate from bicarbonate: step 1/3. In terms of biological role, small subunit of the glutamine-dependent carbamoyl phosphate synthetase (CPSase). CPSase catalyzes the formation of carbamoyl phosphate from the ammonia moiety of glutamine, carbonate, and phosphate donated by ATP, constituting the first step of 2 biosynthetic pathways, one leading to arginine and/or urea and the other to pyrimidine nucleotides. The small subunit (glutamine amidotransferase) binds and cleaves glutamine to supply the large subunit with the substrate ammonia. This is Carbamoyl phosphate synthase small chain from Streptococcus agalactiae serotype III (strain NEM316).